The primary structure comprises 266 residues: Chymotrypsin-like elastase family member 1 (266 aa).

Residues 1–16 (MLRLLVFTSLVLYGHS) form the signal peptide. A propeptide spans 17-26 (TQDFPETNAR) (activation peptide). Residues 27 to 264 (VVGGTAVSKN…YISWINNAIA (238 aa)) enclose the Peptidase S1 domain. A disulfide bond links C56 and C72. The active-site Charge relay system is the H71. Ca(2+) is bound by residues D85, N87, Q90, and E95. An N-linked (GlcNAc...) asparagine glycan is attached at N87. D119 acts as the Charge relay system in catalysis. Intrachain disulfides connect C153/C220, C184/C200, and C210/C240. Catalysis depends on S214, which acts as the Charge relay system. Residue N241 is glycosylated (N-linked (GlcNAc...) asparagine).

It belongs to the peptidase S1 family. Elastase subfamily. Ca(2+) serves as cofactor. Pancreas.

It is found in the secreted. It catalyses the reaction Hydrolysis of proteins, including elastin. Preferential cleavage: Ala-|-Xaa.. In terms of biological role, serine proteases that hydrolyze many proteins in addition to elastin. This is Chymotrypsin-like elastase family member 1 (CELA1) from Bos taurus (Bovine).